A 394-amino-acid chain; its full sequence is Obg-like ATPase 1 (394 aa).

Positions Leu25–Cys282 constitute an OBG-type G domain. Residues Asn34 to Thr39, Phe56 to Asp60, and Asp94 to Gly97 each bind ATP. Asn34–Thr39 serves as a coordination point for GTP. Mg(2+)-binding residues include Ser38 and Thr58. Residues Phe129 and Asn230 each contribute to the GTP site. ATP-binding positions include Asn230–Met231, Met231, and Ser263–Ala265. Position 263 to 265 (Ser263 to Ala265) interacts with GTP. Residues His303–Phe386 enclose the TGS domain.

This sequence belongs to the TRAFAC class OBG-HflX-like GTPase superfamily. OBG GTPase family. YchF/OLA1 subfamily. In terms of assembly, monomer (Potential). Interacts with GAP1. It depends on Mg(2+) as a cofactor.

Its subcellular location is the cell membrane. The protein localises to the cytoplasm. It localises to the cytosol. With respect to regulation, activated by GAP1. Hydrolyzes ATP, and can also hydrolyze GTP with lower efficiency. Has lower affinity for GTP (Potential). Exhibits GTPase activity. Exhibits similar binding affinities and hydrolytic activities toward both GTP and ATP. Binds to the 26 S ribosomal RNA in vitro, but not to the 5.8 S or 18 S rRNA. Confers sensitivity to salinity stress by suppressing the anti-oxidation enzymatic activities and increasing lipid peroxidation thus leading to the accumulation of reactive oxygen species (ROS). The protein is Obg-like ATPase 1 of Oryza sativa subsp. japonica (Rice).